The chain runs to 427 residues: Peptidase B (427 aa).

The Mn(2+) site is built by Lys195 and Asp200. Lys207 is a catalytic residue. Positions 218, 277, and 279 each coordinate Mn(2+). The active site involves Arg281.

The protein belongs to the peptidase M17 family. Homohexamer. Mn(2+) is required as a cofactor.

Its subcellular location is the cytoplasm. It carries out the reaction Release of an N-terminal amino acid, Xaa, from a peptide or arylamide. Xaa is preferably Glu or Asp but may be other amino acids, including Leu, Met, His, Cys and Gln.. In terms of biological role, probably plays an important role in intracellular peptide degradation. The sequence is that of Peptidase B from Escherichia coli O157:H7.